A 462-amino-acid chain; its full sequence is 3-ketoacyl CoA thiolase 1, peroxisomal (462 aa).

The transit peptide at 1–34 (MEKAIQRQRVLLEHLQPIRHHTHDHSSSLTTSIC) directs the protein to the peroxisome. Residue Cys138 is the Acyl-thioester intermediate of the active site. Catalysis depends on proton acceptor residues His393 and Cys425. Position 427 (Gly427) interacts with substrate.

The protein belongs to the thiolase-like superfamily. Thiolase family. In terms of assembly, homodimer.

The protein resides in the peroxisome. The enzyme catalyses an acyl-CoA + acetyl-CoA = a 3-oxoacyl-CoA + CoA. Its pathway is aromatic compound metabolism. The protein operates within lipid metabolism; fatty acid metabolism. Component of the floral volatile benzenoid/phenylpropanoid (FVBP) biosynthetic pathway. Thiolase that catalyzes the conversion of 3-oxo-3-phenylpropionyl-CoA (benzoylacetyl-CoA) to benzoyl-CoA. The polypeptide is 3-ketoacyl CoA thiolase 1, peroxisomal (Petunia hybrida (Petunia)).